Consider the following 370-residue polypeptide: Proline-rich protein 5-like (370 aa).

Position 28 is a phosphoserine (Ser-28). Residues 327–370 form a disordered region; the sequence is PTFPPPHRQCSSEPSILDSPDEMELEDVASGSQEDSELNCASLS.

Belongs to the PROTOR family. In terms of assembly, interacts with the mammalian target of rapamycin complex 2 (mTORC2) which contains MTOR, MLST8, PRR5, RICTOR, MAPKAP1 and DEPTOR. Interacts with RFFL. Interacts (via C-terminus) with ZFP36 (via C-terminus); this interaction may accelerate ZFP36-mediated mRNA decay during stress. Interacts with RICTOR. Ubiquitinated. Ubiquitination by RFFL promotes proteasomal degradation of PRR5L thereby modifying the substrate-specific activity of the mTORC2 complex. Ubiquitination by RFFL is stimulated by LPA/lysophosphatidic acid.

Associates with the mTORC2 complex that regulates cellular processes including survival and organization of the cytoskeleton. Regulates the activity of the mTORC2 complex in a substrate-specific manner preventing for instance the specific phosphorylation of PKCs and thereby controlling cell migration. Plays a role in the stimulation of ZFP36-mediated mRNA decay of several ZFP36-associated mRNAs, such as TNF-alpha and GM-CSF, in response to stress. Required for ZFP36 localization to cytoplasmic stress granule (SG) and P-body (PB) in response to stress. This is Proline-rich protein 5-like (Prr5l) from Rattus norvegicus (Rat).